The primary structure comprises 770 residues: Proprotein convertase subtilisin/kexin type 7 (770 aa).

Residues 1–36 (MPKGRQKVPHLDAHLGLPICLWLELAIFFLVPQVMG) form the signal peptide. The propeptide occupies 37–140 (LSEAGGLDIL…EQTLLKRAKR (104 aa)). At 141–666 (SIHFNDPKYP…YTITPNTLKT (526 aa)) the chain is on the extracellular side. The Peptidase S8 domain maps to 152-472 (QWHLNNRRSP…FGLLNAWRLV (321 aa)). N-linked (GlcNAc...) asparagine glycans are attached at residues Asn-166 and Asn-174. Asp-186 functions as the Charge relay system in the catalytic mechanism. Positions 195 to 228 (DIAPNYSPEGSYDLNSNDPDPMPHPDEENGNHHG) are disordered. A compositionally biased stretch (basic and acidic residues) spans 215 to 225 (PMPHPDEENGN). The active-site Charge relay system is His-227. N-linked (GlcNAc...) asparagine glycosylation occurs at Asn-240. The Charge relay system role is filled by Ser-405. Residues 480-617 (SVPYLASYVS…QLTLYGSMWS (138 aa)) enclose the P/Homo B domain. An N-linked (GlcNAc...) asparagine glycan is attached at Asn-510. Residues 667 to 687 (LVLVGCFSVFWTIYYMLEVCL) form a helical membrane-spanning segment. Over 688–770 (SQRNKASTHG…LLQGKSGQIC (83 aa)) the chain is Cytoplasmic.

The protein belongs to the peptidase S8 family. Ca(2+) is required as a cofactor. As to expression, widely expressed. Expressed in brain, lung, muscle, heart, liver, kidney, spleen and thymus.

The protein resides in the golgi apparatus. The protein localises to the trans-Golgi network membrane. Inhibited by zinc and copper. In terms of biological role, serine endoprotease that processes various proproteins by cleavage at paired basic amino acids, recognizing the RXXX[KR]R consensus motif. Likely functions in the constitutive secretory pathway. This Mus musculus (Mouse) protein is Proprotein convertase subtilisin/kexin type 7 (Pcsk7).